We begin with the raw amino-acid sequence, 151 residues long: MEKPAGFWIRFLAYFIDGIIVSVPSYIILFIINSVFVAGAVATNPYMTEEEYLVKYMTLAFLPTMLIMIVISVLYYGLLTASKMQGTLGKKILGLKVVNEQGERVSVGQGIGRYFAYILSGIIFYIGFIMIAFGEKKGLHDIICKTRVVYK.

3 consecutive transmembrane segments (helical) span residues 12–32 (LAYF…LFII), 59–79 (LAFL…YGLL), and 114–134 (YFAY…IAFG).

The protein localises to the cell membrane. This is an uncharacterized protein from Bacillus subtilis (strain 168).